An 82-amino-acid chain; its full sequence is Small ribosomal subunit protein bS16 (82 aa).

Belongs to the bacterial ribosomal protein bS16 family.

The sequence is that of Small ribosomal subunit protein bS16 from Haemophilus influenzae (strain 86-028NP).